The chain runs to 175 residues: Protein GrpE (175 aa).

A disordered region spans residues 1–35 (MSEQKQEIENENAQNSENLQDDLQDNEKNETNELQ). Positions 25 to 35 (DNEKNETNELQ) are enriched in basic and acidic residues.

The protein belongs to the GrpE family. As to quaternary structure, homodimer.

The protein resides in the cytoplasm. In terms of biological role, participates actively in the response to hyperosmotic and heat shock by preventing the aggregation of stress-denatured proteins, in association with DnaK and GrpE. It is the nucleotide exchange factor for DnaK and may function as a thermosensor. Unfolded proteins bind initially to DnaJ; upon interaction with the DnaJ-bound protein, DnaK hydrolyzes its bound ATP, resulting in the formation of a stable complex. GrpE releases ADP from DnaK; ATP binding to DnaK triggers the release of the substrate protein, thus completing the reaction cycle. Several rounds of ATP-dependent interactions between DnaJ, DnaK and GrpE are required for fully efficient folding. The chain is Protein GrpE from Campylobacter jejuni (strain RM1221).